A 106-amino-acid polypeptide reads, in one-letter code: uncharacterized protein (106 aa).

2 disordered regions span residues 27 to 47 (FSDS…DVSD) and 83 to 106 (SPAM…VQSK). Over residues 29-39 (DSEDEPDDEAS) the composition is skewed to acidic residues. The span at 94–106 (GIEREDRGGVQSK) shows a compositional bias: basic and acidic residues.

It is found in the mitochondrion. This is an uncharacterized protein from Arabidopsis thaliana (Mouse-ear cress).